The sequence spans 487 residues: Schwannomin-interacting protein 1 (487 aa).

Disordered stretches follow at residues 1–74 (MERS…VSAL), 88–221 (VIDE…PVPP), 236–260 (FREQEVRNQGQARTNSTSAQKNERE), and 308–354 (SGSD…SLDD). A compositionally biased stretch (basic and acidic residues) spans 14-27 (DQGKHSDSDYREDG). Over residues 32-67 (SDAGSSSSSSRASSQSNSTKVTPCSECKSSSSPGGS) the composition is skewed to low complexity. Residues 92-106 (WAPEEDGEEEEEEDE) are compositionally biased toward acidic residues. Basic and acidic residues-rich tracts occupy residues 107 to 123 (RDQRGYRDDRSPAREPG) and 153 to 162 (HQHDPQDLRH). Position 117 is a phosphoserine (Ser-117). Residues 242–255 (RNQGQARTNSTSAQ) are compositionally biased toward polar residues. Basic and acidic residues predominate over residues 309 to 323 (GSDKDSDADDSKTET). Positions 324-335 (SLDTPLSPMSKQ) are enriched in polar residues. Over residues 344 to 354 (TTEEESESLDD) the composition is skewed to acidic residues. Residues 424–458 (IGQLQVIVNDLHSQIESLNEELVQLLLIRDELHTE) are a coiled coil.

Belongs to the SCHIP1 family. In terms of assembly, homooligomer (via coiled coil domain). Interacts with NF2; the interaction is direct. Interacts with ANK3. As to expression, preferentially expressed in brain, skeletal muscles and heart. Also expressed in detected in pancreas, kidney, liver, lung, and placenta.

Its subcellular location is the cytoplasm. The protein is Schwannomin-interacting protein 1 of Homo sapiens (Human).